The sequence spans 540 residues: Receptor-interacting serine/threonine-protein kinase 2 (540 aa).

A Protein kinase domain is found at 18 to 294; sequence LADLRYLSRG…KCLIELEPVL (277 aa). ATP-binding positions include 24–32 and lysine 47; that span reads LSRGASGTV. A helix alphaC region spans residues 65–73; that stretch reads REAEILHKA. Residue aspartate 146 is the Proton acceptor of the active site. The segment at 167–193 is activation segment (AS); sequence LSKWRMMSLSQSRSSKSAPEGGTIVYM. At serine 168 the chain carries Phosphoserine. Serine 174 bears the Phosphoserine; alternate mark. Serine 176 is subject to Phosphoserine; by autocatalysis. Position 178 is a phosphoserine; alternate (serine 178). Serine 180 carries the post-translational modification Phosphoserine. At serine 181 the chain carries Phosphoserine; alternate. Lysine 209 participates in a covalent cross-link: Glycyl lysine isopeptide (Lys-Gly) (interchain with G-Cter in ubiquitin). Residues 318 to 367 are disordered; the sequence is SRTVHLSDKKKRELSPNIPVNSGPREESCGSSQLHKTSGSPGTSRSLSAP. Residues 322 to 331 show a composition bias toward basic and acidic residues; that stretch reads HLSDKKKREL. The segment covering 346–366 has biased composition (polar residues); sequence CGSSQLHKTSGSPGTSRSLSA. Phosphoserine occurs at positions 363 and 391. One can recognise a CARD domain in the interval 432–524; the sequence is GIAQQWIQSK…LQPYPEILVL (93 aa). Tyrosine 472 is modified (phosphotyrosine; by autocatalysis). Residues serine 525, serine 527, and serine 529 each carry the phosphoserine modification. A Glycyl lysine isopeptide (Lys-Gly) (interchain with G-Cter in ubiquitin) cross-link involves residue lysine 536. Residue serine 537 is modified to Phosphoserine.

Belongs to the protein kinase superfamily. TKL Ser/Thr protein kinase family. Interacts (via CARD domain) with NOD2 (via CARD domain). Interacts (via CARD domain) with NOD1 (via CARD domain). Homooligomer; following interaction with NOD1 or NOD2, homooligomerizes via its CARD domain and forms long filaments named RIPosomes. Found in a signaling complex consisting of at least ARHGEF2, NOD2 and RIPK2. Interacts with ARHGEF2; the interaction mediates tyrosine phosphorylation of RIPK2 by Src kinase CSK. Interacts with MAP3K4; this interaction sequesters RIPK2 from the NOD2 signaling pathway. Interacts with IKBKG/NEMO. The polyubiquitinated protein interacts with MAP3K7/TAK1; interaction is indirect and is mediated by TAB2 and TAB3 that bind to polyubiquitin chains attached to RIPK2. Binds to CFLAR/CLARP and CASP1 via their CARD domains. Binds to BIRC3/c-IAP1 and BIRC2/c-IAP2, TRAF1, TRAF2, TRAF5 and TRAF6. Interacts with NLRP10. Interacts with CARD9. Interacts with INAVA; the interaction takes place upon PRR stimulation. Interacts (via CARD domain) with NGFR (via death domain). Interacts with IRGM; promoting RIPK2 degradation. Post-translationally, polyubiquitinated via both 'Lys-63'- and 'Met-1'-linked polyubiquitin following recruitment by NOD1 or NOD2, creating docking sites for downstream effectors, triggering activation of the NF-kappa-B and MAP kinases signaling. 'Lys-63'-linked polyubiquitination by XIAP is essential for NOD2 signaling and promotes recruitment of the LUBAC complex. Also polyubiquitinated with 'Lys-63'-linked chains by PELI3, BIRC2/c-IAP1 and BIRC3/c-IAP2. Ubiquitinated on Lys-209 via 'Lys-63'-linked by ITCH. Undergoes 'Lys-63'-linked deubiquitination by MYSM1 to attenuate NOD2-mediated inflammation and tissue damage. Polyubiquitinated with 'Lys-63'-linked chains in response to Shigella infection, promoting its SQSTM1/p62-dependent autophagic degradation. Undergoes 'Met-1'-linked polyubiquitination; the head-to-tail linear polyubiquitination is mediated by the LUBAC complex in response to NOD2 stimulation 'Met-1'-linked polyubiquitination. 'Lys-63'-linked polyubiquitination by XIAP is required for recruimtent of the LUBAC complex and subsequent. Linear polyubiquitination is restricted by FAM105B/otulin, probably to limit NOD2-dependent pro-inflammatory signaling activation of NF-kappa-B. In terms of processing, autophosphorylated. Phosphorylated at Ser-176, either via autophosphorylation or by LRRK2, enhancing activity. Autophosphorylation at Tyr-472 is required for effective NOD2 signaling. Autophosphorylation is however not essential for NOD2 signaling. Degraded via selective autophagy following interaction with IRGM. IRGM promotes NOD1/NOD2-RIPK2 RIPosome recruitment to autophagosome membranes. RIPK2 biquitinated via 'Lys-63'-linked chains is then recognized by SQSTM1/p62, leading to the SQSTM1/p62-dependent autophagic degradation of the NOD1/NOD2-RIPK2 RIPosome.

It localises to the cytoplasm. The protein localises to the cell membrane. It is found in the endoplasmic reticulum. It carries out the reaction L-seryl-[protein] + ATP = O-phospho-L-seryl-[protein] + ADP + H(+). The catalysed reaction is L-threonyl-[protein] + ATP = O-phospho-L-threonyl-[protein] + ADP + H(+). It catalyses the reaction L-tyrosyl-[protein] + ATP = O-phospho-L-tyrosyl-[protein] + ADP + H(+). Its activity is regulated as follows. In the inactive state, the helix alphaC is packed against the helical, non-phosphorylated activation segment (AS). Upon activation, helix alphaC is displaced and the phosphorylated AS becomes disordered. Functionally, serine/threonine/tyrosine-protein kinase that plays an essential role in modulation of innate and adaptive immune responses. Acts as a key effector of NOD1 and NOD2 signaling pathways: upon activation by bacterial peptidoglycans, NOD1 and NOD2 oligomerize and recruit RIPK2 via CARD-CARD domains, leading to the formation of RIPK2 filaments. Once recruited, RIPK2 autophosphorylates and undergoes 'Lys-63'-linked polyubiquitination by E3 ubiquitin ligases XIAP, BIRC2 and BIRC3, as well as 'Met-1'-linked (linear) polyubiquitination by the LUBAC complex, becoming a scaffolding protein for downstream effectors. 'Met-1'-linked polyubiquitin chains attached to RIPK2 recruit IKBKG/NEMO, which undergoes 'Lys-63'-linked polyubiquitination in a RIPK2-dependent process. 'Lys-63'-linked polyubiquitin chains attached to RIPK2 serve as docking sites for TAB2 and TAB3 and mediate the recruitment of MAP3K7/TAK1 to IKBKG/NEMO, inducing subsequent activation of IKBKB/IKKB. In turn, NF-kappa-B is released from NF-kappa-B inhibitors and translocates into the nucleus where it activates the transcription of hundreds of genes involved in immune response, growth control, or protection against apoptosis. The protein kinase activity is dispensable for the NOD1 and NOD2 signaling pathways. Contributes to the tyrosine phosphorylation of the guanine exchange factor ARHGEF2 through Src tyrosine kinase leading to NF-kappa-B activation by NOD2. Also involved in adaptive immunity: plays a role during engagement of the T-cell receptor (TCR) in promoting BCL10 phosphorylation and subsequent NF-kappa-B activation. Plays a role in the inactivation of RHOA in response to NGFR signaling. This is Receptor-interacting serine/threonine-protein kinase 2 (RIPK2) from Bos taurus (Bovine).